The primary structure comprises 269 residues: MSKRTNNKKRKHSEYEKELEPENQDENQDEEFLEDKNKDKNQNKNKDKNKNKDMNKNKNKDMNKNNNKNNNKKKKENGNENVLNSQFYKNIKENRQITDIFKTLVECINEKIESLEDEENNNQDNENFIYICEKLREQFIKIYEKEIIEYKLFREIQALTIVKERELYDILKECDKRLALFRDHQSNCLKAKCDVESQMLSIERKEELNEYLYYDNDSIPENSNSTTTTTKKSKKKTKASFLTLVGKANFNTNFPSNFDRLFSISCERD.

A compositionally biased stretch (basic residues) spans 1–12 (MSKRTNNKKRKH). Residues 1–82 (MSKRTNNKKR…KKKENGNENV (82 aa)) are disordered. The segment covering 21–33 (PENQDENQDEEFL) has biased composition (acidic residues). Residues 34–63 (EDKNKDKNQNKNKDKNKNKDMNKNKNKDMN) show a composition bias toward basic and acidic residues.

This is an uncharacterized protein from Dictyostelium discoideum (Social amoeba).